Consider the following 246-residue polypeptide: NH(3)-dependent NAD(+) synthetase (246 aa).

Residue 29 to 36 (GLSGGIDS) coordinates ATP. D35 contacts Mg(2+). Residue R110 participates in deamido-NAD(+) binding. T130 contacts ATP. A Mg(2+)-binding site is contributed by E135. Residues K159 and S181 each coordinate ATP.

It belongs to the NAD synthetase family. Homodimer.

It catalyses the reaction deamido-NAD(+) + NH4(+) + ATP = AMP + diphosphate + NAD(+) + H(+). It participates in cofactor biosynthesis; NAD(+) biosynthesis; NAD(+) from deamido-NAD(+) (ammonia route): step 1/1. Catalyzes the ATP-dependent amidation of deamido-NAD to form NAD. Uses ammonia as a nitrogen source. In Campylobacter jejuni subsp. jejuni serotype O:2 (strain ATCC 700819 / NCTC 11168), this protein is NH(3)-dependent NAD(+) synthetase.